A 351-amino-acid polypeptide reads, in one-letter code: 4-hydroxy-3-methylbut-2-enyl diphosphate reductase (351 aa).

Cys18 contributes to the [4Fe-4S] cluster binding site. His47 and His83 together coordinate (2E)-4-hydroxy-3-methylbut-2-enyl diphosphate. Positions 47 and 83 each coordinate dimethylallyl diphosphate. Residues His47 and His83 each coordinate isopentenyl diphosphate. Cys105 lines the [4Fe-4S] cluster pocket. His133 is a (2E)-4-hydroxy-3-methylbut-2-enyl diphosphate binding site. His133 provides a ligand contact to dimethylallyl diphosphate. Residue His133 participates in isopentenyl diphosphate binding. Glu135 (proton donor) is an active-site residue. Thr174 contributes to the (2E)-4-hydroxy-3-methylbut-2-enyl diphosphate binding site. Cys204 contributes to the [4Fe-4S] cluster binding site. Ser232, Ser233, Asn234, and Ser277 together coordinate (2E)-4-hydroxy-3-methylbut-2-enyl diphosphate. Positions 232, 233, 234, and 277 each coordinate dimethylallyl diphosphate. 4 residues coordinate isopentenyl diphosphate: Ser232, Ser233, Asn234, and Ser277.

This sequence belongs to the IspH family. Requires [4Fe-4S] cluster as cofactor.

The enzyme catalyses isopentenyl diphosphate + 2 oxidized [2Fe-2S]-[ferredoxin] + H2O = (2E)-4-hydroxy-3-methylbut-2-enyl diphosphate + 2 reduced [2Fe-2S]-[ferredoxin] + 2 H(+). It carries out the reaction dimethylallyl diphosphate + 2 oxidized [2Fe-2S]-[ferredoxin] + H2O = (2E)-4-hydroxy-3-methylbut-2-enyl diphosphate + 2 reduced [2Fe-2S]-[ferredoxin] + 2 H(+). Its pathway is isoprenoid biosynthesis; dimethylallyl diphosphate biosynthesis; dimethylallyl diphosphate from (2E)-4-hydroxy-3-methylbutenyl diphosphate: step 1/1. It functions in the pathway isoprenoid biosynthesis; isopentenyl diphosphate biosynthesis via DXP pathway; isopentenyl diphosphate from 1-deoxy-D-xylulose 5-phosphate: step 6/6. In terms of biological role, catalyzes the conversion of 1-hydroxy-2-methyl-2-(E)-butenyl 4-diphosphate (HMBPP) into a mixture of isopentenyl diphosphate (IPP) and dimethylallyl diphosphate (DMAPP). Acts in the terminal step of the DOXP/MEP pathway for isoprenoid precursor biosynthesis. This chain is 4-hydroxy-3-methylbut-2-enyl diphosphate reductase, found in Bartonella tribocorum (strain CIP 105476 / IBS 506).